We begin with the raw amino-acid sequence, 918 residues long: Hexokinase-1 (918 aa).

An N-acetylmethionine modification is found at methionine 1. Positions 1-10 are mitochondrial-binding peptide (MBP); the sequence is MIAAQLLAYY. Hexokinase domains are found at residues 16-458 and 464-906; these read DDQV…MVTA and AEQH…LITA. ATP contacts are provided by residues arginine 30 and 84 to 89; that span reads DLGGSS. The interval 73 to 207 is hexokinase small subdomain 1; sequence DGSEKGDFIA…DYDANIVAVV (135 aa). 84–88 is a binding site for D-glucose 6-phosphate; sequence DLGGS. Residues serine 155, 172-173, and 208-209 contribute to the D-glucose site; these read TK and ND. Residues 208-447 are hexokinase large subdomain 1; it reads NDTVGTMMTC…SDVRFLLSES (240 aa). Residues aspartate 209 and threonine 232 each coordinate D-glucose 6-phosphate. D-glucose is bound by residues asparagine 235, glutamate 260, and 291-294; that span reads QLFE. Serine 337 bears the Phosphoserine mark. 413–415 is a D-glucose 6-phosphate binding site; sequence DGS. 425 to 426 contacts ATP; that stretch reads RR. D-glucose 6-phosphate contacts are provided by residues threonine 449, 532 to 536, and serine 603; that span reads DLGGT. Positions 521–655 are hexokinase small subdomain 2; it reads DGTEHGDFLA…EFDLDVVAVV (135 aa). 532 to 537 is a binding site for ATP; it reads DLGGTN. D-glucose-binding positions include 620–621 and 656–657; these read TK and ND. Residues 656 to 895 form a hexokinase large subdomain 2 region; that stretch reads NDTVGTMMTC…CTVSFLLSED (240 aa). D-glucose 6-phosphate-binding residues include aspartate 657 and threonine 680. ATP is bound at residue threonine 680. Positions 683, 708, and 742 each coordinate D-glucose. Residues 747–748, 784–788, and 863–867 contribute to the ATP site; these read GM, TKFLS, and TLYKL. D-glucose 6-phosphate is bound by residues 861 to 863 and serine 897; that span reads DGT.

Belongs to the hexokinase family. In terms of assembly, monomer. Interacts with RABL2/RABL2A; binds preferentially to GTP-bound RABL2. Interacts with VDAC1. The HK1-VDAC1 complex interacts with ATF2. Interacts (via N-terminal spermatogenic cell-specific region) with PFKM (via C-terminus). Interacts with SMAD5. Expressed in flagella of epididymal sperm.

It is found in the mitochondrion outer membrane. Its subcellular location is the cytoplasm. It localises to the cytosol. The enzyme catalyses a D-hexose + ATP = a D-hexose 6-phosphate + ADP + H(+). The catalysed reaction is D-fructose + ATP = D-fructose 6-phosphate + ADP + H(+). It catalyses the reaction D-glucose + ATP = D-glucose 6-phosphate + ADP + H(+). It carries out the reaction D-mannose + ATP = D-mannose 6-phosphate + ADP + H(+). The enzyme catalyses D-glucosamine + ATP = D-glucosamine 6-phosphate + ADP + H(+). Its pathway is carbohydrate metabolism; hexose metabolism. The protein operates within carbohydrate degradation; glycolysis; D-glyceraldehyde 3-phosphate and glycerone phosphate from D-glucose: step 1/4. Hexokinase is an allosteric enzyme inhibited by its product D-glucose 6-phosphate. Hexokinase activity is inhibited by N-acetyl-D-glucosamine. In terms of biological role, catalyzes the phosphorylation of various hexoses, such as D-glucose, D-glucosamine, D-fructose, D-mannose and 2-deoxy-D-glucose, to hexose 6-phosphate (D-glucose 6-phosphate, D-glucosamine 6-phosphate, D-fructose 6-phosphate, D-mannose 6-phosphate and 2-deoxy-D-glucose 6-phosphate, respectively). Mediates the initial step of glycolysis by catalyzing phosphorylation of D-glucose to D-glucose 6-phosphate. Involved in innate immunity and inflammation by acting as a pattern recognition receptor for bacterial peptidoglycan. When released in the cytosol, N-acetyl-D-glucosamine component of bacterial peptidoglycan inhibits the hexokinase activity of HK1 and causes its dissociation from mitochondrial outer membrane, thereby activating the NLRP3 inflammasome. In Rattus norvegicus (Rat), this protein is Hexokinase-1.